Consider the following 128-residue polypeptide: Sulfurtransferase TusD (128 aa).

The active-site Cysteine persulfide intermediate is the C78.

This sequence belongs to the DsrE/TusD family. Heterohexamer, formed by a dimer of trimers. The hexameric TusBCD complex contains 2 copies each of TusB, TusC and TusD. The TusBCD complex interacts with TusE.

The protein localises to the cytoplasm. Its function is as follows. Part of a sulfur-relay system required for 2-thiolation of 5-methylaminomethyl-2-thiouridine (mnm(5)s(2)U) at tRNA wobble positions. Accepts sulfur from TusA and transfers it in turn to TusE. The protein is Sulfurtransferase TusD of Shigella flexneri serotype 5b (strain 8401).